The primary structure comprises 329 residues: GTP 3',8-cyclase (329 aa).

Residues 8–234 (AFARKFYYLR…QLRQRSDGPA (227 aa)) enclose the Radical SAM core domain. R17 serves as a coordination point for GTP. [4Fe-4S] cluster is bound by residues C24 and C28. Y30 provides a ligand contact to S-adenosyl-L-methionine. [4Fe-4S] cluster is bound at residue C31. R68 contacts GTP. An S-adenosyl-L-methionine-binding site is contributed by G72. A GTP-binding site is contributed by T99. S123 contacts S-adenosyl-L-methionine. Residue K160 participates in GTP binding. M194 serves as a coordination point for S-adenosyl-L-methionine. Residues C257 and C260 each coordinate [4Fe-4S] cluster. 262–264 (RLR) is a binding site for GTP. C274 provides a ligand contact to [4Fe-4S] cluster.

Belongs to the radical SAM superfamily. MoaA family. Monomer and homodimer. [4Fe-4S] cluster serves as cofactor.

It catalyses the reaction GTP + AH2 + S-adenosyl-L-methionine = (8S)-3',8-cyclo-7,8-dihydroguanosine 5'-triphosphate + 5'-deoxyadenosine + L-methionine + A + H(+). It participates in cofactor biosynthesis; molybdopterin biosynthesis. Catalyzes the cyclization of GTP to (8S)-3',8-cyclo-7,8-dihydroguanosine 5'-triphosphate. In Salmonella heidelberg (strain SL476), this protein is GTP 3',8-cyclase.